We begin with the raw amino-acid sequence, 469 residues long: Glutamate--tRNA ligase (469 aa).

Positions 9 to 19 match the 'HIGH' region motif; that stretch reads PSPTGFLHVGG. Zn(2+) is bound by residues Cys-98, Cys-100, Cys-125, and Asp-127. Positions 236–240 match the 'KMSKS' region motif; sequence KLSKR. Position 239 (Lys-239) interacts with ATP.

The protein belongs to the class-I aminoacyl-tRNA synthetase family. Glutamate--tRNA ligase type 1 subfamily. As to quaternary structure, monomer. Zn(2+) is required as a cofactor.

Its subcellular location is the cytoplasm. It carries out the reaction tRNA(Glu) + L-glutamate + ATP = L-glutamyl-tRNA(Glu) + AMP + diphosphate. Its function is as follows. Catalyzes the attachment of glutamate to tRNA(Glu) in a two-step reaction: glutamate is first activated by ATP to form Glu-AMP and then transferred to the acceptor end of tRNA(Glu). The sequence is that of Glutamate--tRNA ligase from Shewanella baltica (strain OS155 / ATCC BAA-1091).